Reading from the N-terminus, the 138-residue chain is Basic phospholipase A2 Tpu-G6D49 (138 aa).

An N-terminal signal peptide occupies residues 1 to 16; sequence MRTLWIMAVLLVGVEG. Intrachain disulfides connect C42-C131, C44-C60, C59-C111, C65-C138, C66-C104, C73-C97, and C91-C102. Ca(2+)-binding residues include Y43, G45, and G47. H63 is a catalytic residue. D64 is a Ca(2+) binding site. The active site involves D105.

As to quaternary structure, monomer. It depends on Ca(2+) as a cofactor. As to expression, expressed by the venom gland.

It localises to the secreted. The catalysed reaction is a 1,2-diacyl-sn-glycero-3-phosphocholine + H2O = a 1-acyl-sn-glycero-3-phosphocholine + a fatty acid + H(+). Its function is as follows. Snake venom phospholipase A2 (PLA2) that impairs hemostasis. It weakly inhibits ADP-induced platelet aggregation when tested on platelet rich plasma from human and rabbit blood (15-25% of inhibition at 5-10 ug of enzyme), and dose-dependently inhibits blood coagulation, possibly by inhibiting thrombin activation. Also induces local edema a few hours after injection in the hind foot. Exhibits high hydrolytic activities toward L-dipalmitoyl phosphatidylcholine. PLA2 catalyzes the calcium-dependent hydrolysis of the 2-acyl groups in 3-sn-phosphoglycerides. This is Basic phospholipase A2 Tpu-G6D49 from Craspedocephalus puniceus (Flat-nosed pitviper).